The sequence spans 631 residues: 1-deoxy-D-xylulose-5-phosphate synthase (631 aa).

Thiamine diphosphate contacts are provided by residues histidine 87 and 128–130; that span reads GHS. Aspartate 159 serves as a coordination point for Mg(2+). Residues 160-161, asparagine 188, phenylalanine 295, and glutamate 377 contribute to the thiamine diphosphate site; that span reads GA. Asparagine 188 serves as a coordination point for Mg(2+).

It belongs to the transketolase family. DXPS subfamily. Homodimer. The cofactor is Mg(2+). Thiamine diphosphate is required as a cofactor.

It catalyses the reaction D-glyceraldehyde 3-phosphate + pyruvate + H(+) = 1-deoxy-D-xylulose 5-phosphate + CO2. It participates in metabolic intermediate biosynthesis; 1-deoxy-D-xylulose 5-phosphate biosynthesis; 1-deoxy-D-xylulose 5-phosphate from D-glyceraldehyde 3-phosphate and pyruvate: step 1/1. Its function is as follows. Catalyzes the acyloin condensation reaction between C atoms 2 and 3 of pyruvate and glyceraldehyde 3-phosphate to yield 1-deoxy-D-xylulose-5-phosphate (DXP). This chain is 1-deoxy-D-xylulose-5-phosphate synthase, found in Pseudomonas putida (strain GB-1).